The chain runs to 360 residues: Ribosomal RNA large subunit methyltransferase F (360 aa).

The disordered stretch occupies residues 1–38 (MTRSTTPPMRAKHSSAKRSPSRSAAKVNPVSVKPNKPL). Residues 10–20 (RAKHSSAKRSP) are compositionally biased toward basic residues.

It belongs to the methyltransferase superfamily. METTL16/RlmF family.

The protein resides in the cytoplasm. The enzyme catalyses adenosine(1618) in 23S rRNA + S-adenosyl-L-methionine = N(6)-methyladenosine(1618) in 23S rRNA + S-adenosyl-L-homocysteine + H(+). Functionally, specifically methylates the adenine in position 1618 of 23S rRNA. This Shewanella frigidimarina (strain NCIMB 400) protein is Ribosomal RNA large subunit methyltransferase F.